A 717-amino-acid polypeptide reads, in one-letter code: Translation initiation factor eIF2B subunit epsilon (717 aa).

A compositionally biased stretch (low complexity) spans 1–14 (MAATAAVPGAAAGR). The interval 1-37 (MAATAAVPGAAAGRASKRGGGGSGGGGTQGAEEEPPP) is disordered. Arg18 bears the Omega-N-methylarginine mark. A compositionally biased stretch (gly residues) spans 18 to 29 (RGGGGSGGGGTQ). Ser23 carries the phosphoserine modification. Glycyl lysine isopeptide (Lys-Gly) (interchain with G-Cter in ubiquitin) cross-links involve residues Lys57 and Lys99. Ser126 carries the post-translational modification Phosphoserine. Glycyl lysine isopeptide (Lys-Gly) (interchain with G-Cter in ubiquitin) cross-links involve residues Lys137 and Lys213. At Thr318 the chain carries Phosphothreonine. Residues 442–479 (GSVISLHPPDAEEDEDDGQFSDDSGADQEKEKVKLKGY) form a disordered region. A phosphoserine mark is found at Ser446, Ser462, and Ser465. Over residues 452–467 (AEEDEDDGQFSDDSGA) the composition is skewed to acidic residues. A Glycyl lysine isopeptide (Lys-Gly) (interchain with G-Cter in ubiquitin) cross-link involves residue Lys501. The tract at residues 517–538 (TEEESETESEGSVDPEELDSRA) is disordered. Residues 519–533 (EESETESEGSVDPEE) show a composition bias toward acidic residues. Residues Ser528 and Ser536 each carry the phosphoserine modification. Residues 539–716 (GSPQLDDIRV…REAEEESSED (178 aa)) enclose the W2 domain. Ser540 is modified (phosphoserine; by DYRK2). At Ser713 the chain carries Phosphoserine.

This sequence belongs to the eIF-2B gamma/epsilon subunits family. In terms of assembly, component of the translation initiation factor 2B (eIF2B) complex which is a heterodecamer of two sets of five different subunits: alpha, beta, gamma, delta and epsilon. Subunits alpha, beta and delta comprise a regulatory subcomplex and subunits epsilon and gamma comprise a catalytic subcomplex. Within the complex, the hexameric regulatory complex resides at the center, with the two heterodimeric catalytic subcomplexes bound on opposite sides. Post-translationally, phosphorylated at Ser-540 by DYRK2; this is required for subsequent phosphorylation by GSK3B. Phosphorylated on serine and threonine residues by GSK3B; phosphorylation inhibits its function. Polyubiquitinated, probably by NEDD4.

Its subcellular location is the cytoplasm. The protein localises to the cytosol. Activated by the chemical integrated stress response (ISR) inhibitor ISRIB which stimulates guanine nucleotide exchange factor activity for both phosphorylated and unphosphorylated eIF2. In terms of biological role, acts as a component of the translation initiation factor 2B (eIF2B) complex, which catalyzes the exchange of GDP for GTP on eukaryotic initiation factor 2 (eIF2) gamma subunit. Its guanine nucleotide exchange factor activity is repressed when bound to eIF2 complex phosphorylated on the alpha subunit, thereby limiting the amount of methionyl-initiator methionine tRNA available to the ribosome and consequently global translation is repressed. This Mus musculus (Mouse) protein is Translation initiation factor eIF2B subunit epsilon (Eif2b5).